The following is a 69-amino-acid chain: DNA gyrase inhibitor YacG (69 aa).

Zn(2+) is bound by residues C13, C16, C32, and C36.

It belongs to the DNA gyrase inhibitor YacG family. In terms of assembly, interacts with GyrB. Zn(2+) is required as a cofactor.

In terms of biological role, inhibits all the catalytic activities of DNA gyrase by preventing its interaction with DNA. Acts by binding directly to the C-terminal domain of GyrB, which probably disrupts DNA binding by the gyrase. In Neisseria meningitidis serogroup C / serotype 2a (strain ATCC 700532 / DSM 15464 / FAM18), this protein is DNA gyrase inhibitor YacG.